The sequence spans 398 residues: Immunoglobulin heavy constant gamma 2A (398 aa).

3 Ig-like domains span residues 5–97 (PSVY…KKIE), 120–219 (PSVF…RTIS), and 228–324 (PQVY…KSFS). Disulfide bonds link C26–C81, C143–C203, and C249–C307. N179 carries N-linked (GlcNAc...) asparagine glycosylation. The helical transmembrane segment at 345–362 (GLWTTITIFISLFLLSVC) threads the bilayer. The Cytoplasmic portion of the chain corresponds to 363–398 (YSASVTLFKVKWIFSSVVELKQTISPDYRNMIGQGA).

It localises to the cell membrane. In Mus musculus (Mouse), this protein is Immunoglobulin heavy constant gamma 2A.